The primary structure comprises 258 residues: Venom plasminogen activator GPV-PA (258 aa).

The first 18 residues, 1–18, serve as a signal peptide directing secretion; the sequence is MVLIRVLANLLILQLSYA. Positions 19 to 24 are excised as a propeptide; the sequence is QKSSEL. The Peptidase S1 domain occupies 25 to 249; sequence VFGGRPCNIN…YTDWIQSIIA (225 aa). 6 disulfide bridges follow: Cys-31–Cys-163, Cys-50–Cys-66, Cys-98–Cys-256, Cys-142–Cys-210, Cys-174–Cys-189, and Cys-200–Cys-225. N-linked (GlcNAc...) asparagine glycosylation occurs at Asn-44. Active-site charge relay system residues include His-65 and Asp-110. 2 N-linked (GlcNAc...) asparagine glycosylation sites follow: Asn-121 and Asn-185. Ser-204 functions as the Charge relay system in the catalytic mechanism.

The protein belongs to the peptidase S1 family. Snake venom subfamily. Monomer. Expressed by the venom gland.

It is found in the secreted. Its function is as follows. Snake venom serine protease that activates plasminogen. This is Venom plasminogen activator GPV-PA from Trimeresurus albolabris (White-lipped pit viper).